The sequence spans 176 residues: Nucleoside triphosphate/diphosphate phosphatase (176 aa).

Arg23 acts as the Proton donor in catalysis. 6 residues coordinate Mg(2+): Asn87, Asp103, Asp105, Asp107, Asp120, and Glu123.

The protein belongs to the Ntdp family. Requires Mg(2+) as cofactor.

It carries out the reaction a ribonucleoside 5'-triphosphate + H2O = a ribonucleoside 5'-diphosphate + phosphate + H(+). The enzyme catalyses a ribonucleoside 5'-diphosphate + H2O = a ribonucleoside 5'-phosphate + phosphate + H(+). Functionally, has nucleoside phosphatase activity towards nucleoside triphosphates and nucleoside diphosphates. The sequence is that of Nucleoside triphosphate/diphosphate phosphatase (yjjG) from Lactococcus lactis subsp. lactis (strain IL1403) (Streptococcus lactis).